A 411-amino-acid polypeptide reads, in one-letter code: Glutamyl-tRNA reductase (411 aa).

Substrate-binding positions include 49–52 (TCNR), S99, 104–106 (ENE), and Q110. The Nucleophile role is filled by C50. 179–184 (GAGEAG) lines the NADP(+) pocket.

It belongs to the glutamyl-tRNA reductase family. Homodimer.

The enzyme catalyses (S)-4-amino-5-oxopentanoate + tRNA(Glu) + NADP(+) = L-glutamyl-tRNA(Glu) + NADPH + H(+). It participates in porphyrin-containing compound metabolism; protoporphyrin-IX biosynthesis; 5-aminolevulinate from L-glutamyl-tRNA(Glu): step 1/2. Functionally, catalyzes the NADPH-dependent reduction of glutamyl-tRNA(Glu) to glutamate 1-semialdehyde (GSA). This Hyperthermus butylicus (strain DSM 5456 / JCM 9403 / PLM1-5) protein is Glutamyl-tRNA reductase.